Consider the following 342-residue polypeptide: Alpha-tocopherol transfer protein-like (342 aa).

Residues 1-31 (MSEESDSLRTSPSVASLSENELPPPPEPPGY) are disordered. The segment covering 8-19 (LRTSPSVASLSE) has biased composition (polar residues). Residues 117–282 (KPSALKDVLA…EYGGTAGELD (166 aa)) enclose the CRAL-TRIO domain.

In terms of biological role, may act as a protein that binds a hydrophobic ligand. The protein is Alpha-tocopherol transfer protein-like (TTPAL) of Homo sapiens (Human).